The following is a 147-amino-acid chain: UPF0735 ACT domain-containing protein ABC1543 (147 aa).

Residues 70 to 145 enclose the ACT domain; the sequence is TFSINLADRS…SVERVELVGS (76 aa).

This sequence belongs to the UPF0735 family.

The chain is UPF0735 ACT domain-containing protein ABC1543 from Shouchella clausii (strain KSM-K16) (Alkalihalobacillus clausii).